Consider the following 398-residue polypeptide: G2/mitotic-specific cyclin-B2 (398 aa).

Position 8 is a phosphothreonine (Thr-8). 3 positions are modified to phosphoserine: Ser-11, Ser-77, and Ser-92. Thr-94 is modified (phosphothreonine). Phosphoserine occurs at positions 99, 392, and 398.

It belongs to the cyclin family. Cyclin AB subfamily. In terms of assembly, interacts with the CDK1 protein kinase to form a serine/threonine kinase holoenzyme complex also known as maturation promoting factor (MPF). The cyclin subunit imparts substrate specificity to the complex.

Functionally, essential for the control of the cell cycle at the G2/M (mitosis) transition. The sequence is that of G2/mitotic-specific cyclin-B2 (CCNB2) from Homo sapiens (Human).